We begin with the raw amino-acid sequence, 101 residues long: Small ribosomal subunit protein uS14 (101 aa).

The protein belongs to the universal ribosomal protein uS14 family. In terms of assembly, part of the 30S ribosomal subunit. Contacts proteins S3 and S10.

Its function is as follows. Binds 16S rRNA, required for the assembly of 30S particles and may also be responsible for determining the conformation of the 16S rRNA at the A site. This Pseudomonas putida (strain ATCC 47054 / DSM 6125 / CFBP 8728 / NCIMB 11950 / KT2440) protein is Small ribosomal subunit protein uS14.